The sequence spans 321 residues: Flagellin C (321 aa).

This sequence belongs to the bacterial flagellin family.

It localises to the secreted. It is found in the bacterial flagellum. Functionally, flagellin is the subunit protein which polymerizes to form the filaments of bacterial flagella. The protein is Flagellin C (flaC) of Rhizobium meliloti (strain 1021) (Ensifer meliloti).